We begin with the raw amino-acid sequence, 213 residues long: Orotate phosphoribosyltransferase (213 aa).

Position 26 (Lys-26) interacts with 5-phospho-alpha-D-ribose 1-diphosphate. 34-35 (FF) is an orotate binding site. Residues 72–73 (YK), Arg-99, Lys-100, Lys-103, His-105, and 124–132 (DDVITAGTA) each bind 5-phospho-alpha-D-ribose 1-diphosphate. Orotate is bound by residues Thr-128 and Arg-156.

The protein belongs to the purine/pyrimidine phosphoribosyltransferase family. PyrE subfamily. In terms of assembly, homodimer. It depends on Mg(2+) as a cofactor.

The catalysed reaction is orotidine 5'-phosphate + diphosphate = orotate + 5-phospho-alpha-D-ribose 1-diphosphate. It functions in the pathway pyrimidine metabolism; UMP biosynthesis via de novo pathway; UMP from orotate: step 1/2. Its function is as follows. Catalyzes the transfer of a ribosyl phosphate group from 5-phosphoribose 1-diphosphate to orotate, leading to the formation of orotidine monophosphate (OMP). The protein is Orotate phosphoribosyltransferase of Saccharophagus degradans (strain 2-40 / ATCC 43961 / DSM 17024).